The following is a 38-amino-acid chain: Large ribosomal subunit protein bL36 (38 aa).

Belongs to the bacterial ribosomal protein bL36 family.

The chain is Large ribosomal subunit protein bL36 from Cellvibrio japonicus (strain Ueda107) (Pseudomonas fluorescens subsp. cellulosa).